The sequence spans 312 residues: Borealin-2 (312 aa).

Residues 1–10 are compositionally biased toward basic residues; that stretch reads MPPRKAPAKR. The interval 1–26 is disordered; sequence MPPRKAPAKRRSTDSGVERDRGALSQ. Over residues 11-26 the composition is skewed to basic and acidic residues; sequence RSTDSGVERDRGALSQ.

The protein belongs to the borealin family. As to quaternary structure, component of the CPC complex.

The protein resides in the nucleus. Its subcellular location is the chromosome. It localises to the centromere. Functionally, component of the chromosomal passenger complex (CPC), a complex that acts as a key regulator of mitosis. The CPC complex has essential functions at the centromere in ensuring correct chromosome alignment and segregation and is required for chromatin-induced microtubule stabilization and spindle assembly. This Gallus gallus (Chicken) protein is Borealin-2.